Consider the following 382-residue polypeptide: Putative glutamate--cysteine ligase 2-1 (382 aa).

Belongs to the glutamate--cysteine ligase type 2 family. YbdK subfamily.

It catalyses the reaction L-cysteine + L-glutamate + ATP = gamma-L-glutamyl-L-cysteine + ADP + phosphate + H(+). Functionally, ATP-dependent carboxylate-amine ligase which exhibits weak glutamate--cysteine ligase activity. This is Putative glutamate--cysteine ligase 2-1 from Nocardioides sp. (strain ATCC BAA-499 / JS614).